A 234-amino-acid polypeptide reads, in one-letter code: Zinc transport system ATP-binding protein AdcC (234 aa).

In terms of domain architecture, ABC transporter spans 4–234 (ITVEDLSFYY…HENGQEVGHA (231 aa)). 36–43 (GENGAAKT) provides a ligand contact to ATP.

It belongs to the ABC transporter superfamily.

Functionally, part of the ATP-driven transport system AdcABC for zinc. Required for transformability. The sequence is that of Zinc transport system ATP-binding protein AdcC (adcC) from Streptococcus pneumoniae (strain ATCC BAA-255 / R6).